A 343-amino-acid polypeptide reads, in one-letter code: ATP-dependent 6-phosphofructokinase (343 aa).

ATP is bound by residues Gly-10, 73–74, and 103–106; these read RV and GEGT. Glu-104 is a Mg(2+) binding site. Substrate-binding positions include 126-128, Arg-163, 170-172, Glu-223, Arg-267, and 273-276; these read TID, MGR, and HIQR. Asp-128 serves as the catalytic Proton acceptor.

It belongs to the phosphofructokinase type A (PFKA) family. Mixed-substrate PFK group III subfamily. Homodimer or homotetramer. Requires Mg(2+) as cofactor.

The protein localises to the cytoplasm. The catalysed reaction is beta-D-fructose 6-phosphate + ATP = beta-D-fructose 1,6-bisphosphate + ADP + H(+). The enzyme catalyses D-tagatofuranose 6-phosphate + ATP = D-tagatofuranose 1,6-bisphosphate + ADP + H(+). It functions in the pathway carbohydrate degradation; glycolysis; D-glyceraldehyde 3-phosphate and glycerone phosphate from D-glucose: step 3/4. Catalyzes the phosphorylation of D-fructose 6-phosphate to fructose 1,6-bisphosphate by ATP, the first committing step of glycolysis. Can also catalyze the phosphorylation of tagatose-6-phosphate. The sequence is that of ATP-dependent 6-phosphofructokinase from Mycobacterium tuberculosis (strain CDC 1551 / Oshkosh).